The following is a 146-amino-acid chain: Alpha-amylase inhibitor BMAI-1 (146 aa).

A signal peptide spans 1–14 (PTSVAVDQGSMVSN). N-linked (GlcNAc...) asparagine glycosylation occurs at Asn-125.

This sequence belongs to the protease inhibitor I6 (cereal trypsin/alpha-amylase inhibitor) family. As to quaternary structure, monomer. In terms of processing, five disulfide bonds, which are essential for the inhibitor activity, are probably present. Glycosylated. As to expression, endosperm.

Its subcellular location is the secreted. Could be involved in insect defense mechanisms. Inhibits insect-type alpha-amylase. The protein is Alpha-amylase inhibitor BMAI-1 (IAM1) of Hordeum vulgare (Barley).